A 248-amino-acid polypeptide reads, in one-letter code: Small ribosomal subunit protein uS3 (248 aa).

The region spanning 38–106 is the KH type-2 domain; the sequence is IREFLSEGLE…QVQLNILEVK (69 aa). Over residues 214–229 the composition is skewed to basic and acidic residues; it reads SLMNARDERPSRGGRR. Residues 214-248 are disordered; it reads SLMNARDERPSRGGRRERPRRGGARRQRAEKKQEG. The span at 230–242 shows a compositional bias: basic residues; the sequence is ERPRRGGARRQRA.

The protein belongs to the universal ribosomal protein uS3 family. As to quaternary structure, part of the 30S ribosomal subunit. Forms a tight complex with proteins S10 and S14.

Its function is as follows. Binds the lower part of the 30S subunit head. Binds mRNA in the 70S ribosome, positioning it for translation. The polypeptide is Small ribosomal subunit protein uS3 (Corynebacterium urealyticum (strain ATCC 43042 / DSM 7109)).